The primary structure comprises 126 residues: Small ribosomal subunit protein uS13 (126 aa).

The segment at 95-126 is disordered; that stretch reads NLPVHGQRTHTNARTRKGPRRAIAGKKKAGKK.

It belongs to the universal ribosomal protein uS13 family. In terms of assembly, part of the 30S ribosomal subunit. Forms a loose heterodimer with protein S19. Forms two bridges to the 50S subunit in the 70S ribosome.

Functionally, located at the top of the head of the 30S subunit, it contacts several helices of the 16S rRNA. In the 70S ribosome it contacts the 23S rRNA (bridge B1a) and protein L5 of the 50S subunit (bridge B1b), connecting the 2 subunits; these bridges are implicated in subunit movement. Contacts the tRNAs in the A and P-sites. The chain is Small ribosomal subunit protein uS13 from Frankia casuarinae (strain DSM 45818 / CECT 9043 / HFP020203 / CcI3).